The chain runs to 92 residues: Calitoxin (92 aa).

Residues 1-20 (MKTQVLVVLVLCVVFCLAES) form the signal peptide. Positions 21–42 (RNSMTSEERGLVSLMRQRDDIA) are excised as a propeptide. Intrachain disulfides connect cysteine 47/cysteine 86, cysteine 49/cysteine 77, and cysteine 67/cysteine 87.

Belongs to the sea anemone sodium channel inhibitory toxin family. In terms of tissue distribution, expressed both outside and in acontia, a specialised envenomation structure laden with batteries of venom-containing nematocysts found only in the superfamily Metridioidea.

The protein resides in the secreted. Its subcellular location is the nematocyst. Functionally, in neuromuscular preparation of crustaceans, the toxin increased neurotransmitter release, causing repetitive firing of the axons. May affect sodium channels (Nav). The sequence is that of Calitoxin from Calliactis polypus (Hermit crab anemone).